A 415-amino-acid chain; its full sequence is Gamma-glutamyl phosphate reductase (415 aa).

This sequence belongs to the gamma-glutamyl phosphate reductase family.

The protein resides in the cytoplasm. It catalyses the reaction L-glutamate 5-semialdehyde + phosphate + NADP(+) = L-glutamyl 5-phosphate + NADPH + H(+). It participates in amino-acid biosynthesis; L-proline biosynthesis; L-glutamate 5-semialdehyde from L-glutamate: step 2/2. In terms of biological role, catalyzes the NADPH-dependent reduction of L-glutamate 5-phosphate into L-glutamate 5-semialdehyde and phosphate. The product spontaneously undergoes cyclization to form 1-pyrroline-5-carboxylate. The protein is Gamma-glutamyl phosphate reductase of Ligilactobacillus salivarius (strain UCC118) (Lactobacillus salivarius).